The primary structure comprises 332 residues: Flotillin-like protein FloA (332 aa).

2 consecutive transmembrane segments (helical) span residues 6 to 26 and 28 to 48; these read LGYL…FSFV and VGLW…YMIG.

The protein belongs to the flotillin-like FloA family. As to quaternary structure, homooligomerizes.

The protein localises to the cell membrane. It localises to the membrane raft. In terms of biological role, found in functional membrane microdomains (FMM) that may be equivalent to eukaryotic membrane rafts. FMMs are highly dynamic and increase in number as cells age. Flotillins are thought to be important factors in membrane fluidity. In Symbiobacterium thermophilum (strain DSM 24528 / JCM 14929 / IAM 14863 / T), this protein is Flotillin-like protein FloA.